A 606-amino-acid chain; its full sequence is Threonine--tRNA ligase (606 aa).

The interval 212–503 (DHRKLGVEMK…LLEHTAGELP (292 aa)) is catalytic. Zn(2+)-binding residues include cysteine 304, histidine 355, and histidine 480.

The protein belongs to the class-II aminoacyl-tRNA synthetase family. Homodimer. The cofactor is Zn(2+).

The protein resides in the cytoplasm. The enzyme catalyses tRNA(Thr) + L-threonine + ATP = L-threonyl-tRNA(Thr) + AMP + diphosphate + H(+). Its function is as follows. Catalyzes the attachment of threonine to tRNA(Thr) in a two-step reaction: L-threonine is first activated by ATP to form Thr-AMP and then transferred to the acceptor end of tRNA(Thr). Also edits incorrectly charged L-seryl-tRNA(Thr). In Campylobacter concisus (strain 13826), this protein is Threonine--tRNA ligase.